The following is a 291-amino-acid chain: MTSTNLEGTFPLIARGKVRDIYQVDDNTLLFVATDRISAYDVIMANGIPNKGKILTKLSEFWFAFLPIDNHLIKGDIFEKYPQLEKYRDQLEGRSLLVRKLKLIPLEVIVRGYITGSGWKEYTKSKTVHGIPIGDVVESQQITPIFTPSTKAEQGEHDENITKEQADKIVGKELCDRIEKIAIDLYTKARDYAATKGIIIADTKFEFGLDGDKIVLVDEVLTPDSSRFWSAAKYKLGQSQESYDKQFLRDWLTANGVAGKDGVAMPEDIAVQTKQKYVEAYENLTGEKWQD.

This sequence belongs to the SAICAR synthetase family.

The enzyme catalyses 5-amino-1-(5-phospho-D-ribosyl)imidazole-4-carboxylate + L-aspartate + ATP = (2S)-2-[5-amino-1-(5-phospho-beta-D-ribosyl)imidazole-4-carboxamido]succinate + ADP + phosphate + 2 H(+). It functions in the pathway purine metabolism; IMP biosynthesis via de novo pathway; 5-amino-1-(5-phospho-D-ribosyl)imidazole-4-carboxamide from 5-amino-1-(5-phospho-D-ribosyl)imidazole-4-carboxylate: step 1/2. The sequence is that of Phosphoribosylaminoimidazole-succinocarboxamide synthase (ADE1) from Candida albicans (Yeast).